Consider the following 221-residue polypeptide: uncharacterized protein (221 aa).

This is an uncharacterized protein from Methanocaldococcus jannaschii (strain ATCC 43067 / DSM 2661 / JAL-1 / JCM 10045 / NBRC 100440) (Methanococcus jannaschii).